A 163-amino-acid chain; its full sequence is Xanthine-guanine phosphoribosyltransferase (163 aa).

Residues 43-44 (RG) and 95-103 (DDLADTGGT) contribute to the 5-phospho-alpha-D-ribose 1-diphosphate site. Asp96 lines the Mg(2+) pocket. The guanine site is built by Asp99 and Ile142. Asp99 and Ile142 together coordinate xanthine. Residues 99–103 (DTGGT) and 141–142 (WI) contribute to the GMP site.

It belongs to the purine/pyrimidine phosphoribosyltransferase family. XGPT subfamily. In terms of assembly, homotetramer. The cofactor is Mg(2+).

The protein localises to the cell inner membrane. It catalyses the reaction GMP + diphosphate = guanine + 5-phospho-alpha-D-ribose 1-diphosphate. The enzyme catalyses XMP + diphosphate = xanthine + 5-phospho-alpha-D-ribose 1-diphosphate. The catalysed reaction is IMP + diphosphate = hypoxanthine + 5-phospho-alpha-D-ribose 1-diphosphate. Its pathway is purine metabolism; GMP biosynthesis via salvage pathway; GMP from guanine: step 1/1. The protein operates within purine metabolism; XMP biosynthesis via salvage pathway; XMP from xanthine: step 1/1. Its function is as follows. Purine salvage pathway enzyme that catalyzes the transfer of the ribosyl-5-phosphate group from 5-phospho-alpha-D-ribose 1-diphosphate (PRPP) to the N9 position of the 6-oxopurines guanine and xanthine to form the corresponding ribonucleotides GMP (guanosine 5'-monophosphate) and XMP (xanthosine 5'-monophosphate), with the release of PPi. To a lesser extent, also acts on hypoxanthine. This chain is Xanthine-guanine phosphoribosyltransferase, found in Nitratidesulfovibrio vulgaris (strain ATCC 29579 / DSM 644 / CCUG 34227 / NCIMB 8303 / VKM B-1760 / Hildenborough) (Desulfovibrio vulgaris).